Here is a 486-residue protein sequence, read N- to C-terminus: Protein nucleotidyltransferase YdiU (486 aa).

ATP is bound by residues G90, G92, R93, K113, D125, G126, R176, and R183. D252 serves as the catalytic Proton acceptor. Mg(2+) is bound by residues N253 and D262. D262 is an ATP binding site.

Belongs to the SELO family. It depends on Mg(2+) as a cofactor. Mn(2+) is required as a cofactor.

It catalyses the reaction L-seryl-[protein] + ATP = 3-O-(5'-adenylyl)-L-seryl-[protein] + diphosphate. The enzyme catalyses L-threonyl-[protein] + ATP = 3-O-(5'-adenylyl)-L-threonyl-[protein] + diphosphate. It carries out the reaction L-tyrosyl-[protein] + ATP = O-(5'-adenylyl)-L-tyrosyl-[protein] + diphosphate. The catalysed reaction is L-histidyl-[protein] + UTP = N(tele)-(5'-uridylyl)-L-histidyl-[protein] + diphosphate. It catalyses the reaction L-seryl-[protein] + UTP = O-(5'-uridylyl)-L-seryl-[protein] + diphosphate. The enzyme catalyses L-tyrosyl-[protein] + UTP = O-(5'-uridylyl)-L-tyrosyl-[protein] + diphosphate. In terms of biological role, nucleotidyltransferase involved in the post-translational modification of proteins. It can catalyze the addition of adenosine monophosphate (AMP) or uridine monophosphate (UMP) to a protein, resulting in modifications known as AMPylation and UMPylation. The protein is Protein nucleotidyltransferase YdiU of Pseudomonas putida (strain GB-1).